We begin with the raw amino-acid sequence, 569 residues long: Dihydroxy-acid dehydratase (569 aa).

Cys61 contacts [2Fe-2S] cluster. Position 93 (Asp93) interacts with Mg(2+). Residue Cys134 participates in [2Fe-2S] cluster binding. Mg(2+) contacts are provided by Asp135 and Lys136. Lys136 bears the N6-carboxylysine mark. Cys211 provides a ligand contact to [2Fe-2S] cluster. Glu462 serves as a coordination point for Mg(2+). Ser488 (proton acceptor) is an active-site residue.

It belongs to the IlvD/Edd family. Homodimer. [2Fe-2S] cluster serves as cofactor. Requires Mg(2+) as cofactor.

The enzyme catalyses (2R)-2,3-dihydroxy-3-methylbutanoate = 3-methyl-2-oxobutanoate + H2O. The catalysed reaction is (2R,3R)-2,3-dihydroxy-3-methylpentanoate = (S)-3-methyl-2-oxopentanoate + H2O. Its pathway is amino-acid biosynthesis; L-isoleucine biosynthesis; L-isoleucine from 2-oxobutanoate: step 3/4. It functions in the pathway amino-acid biosynthesis; L-valine biosynthesis; L-valine from pyruvate: step 3/4. Functions in the biosynthesis of branched-chain amino acids. Catalyzes the dehydration of (2R,3R)-2,3-dihydroxy-3-methylpentanoate (2,3-dihydroxy-3-methylvalerate) into 2-oxo-3-methylpentanoate (2-oxo-3-methylvalerate) and of (2R)-2,3-dihydroxy-3-methylbutanoate (2,3-dihydroxyisovalerate) into 2-oxo-3-methylbutanoate (2-oxoisovalerate), the penultimate precursor to L-isoleucine and L-valine, respectively. This is Dihydroxy-acid dehydratase from Tropheryma whipplei (strain TW08/27) (Whipple's bacillus).